A 91-amino-acid chain; its full sequence is UPF0250 protein NGK_1021 (91 aa).

This sequence belongs to the UPF0250 family.

This chain is UPF0250 protein NGK_1021, found in Neisseria gonorrhoeae (strain NCCP11945).